Reading from the N-terminus, the 177-residue chain is Large ribosomal subunit protein uL6 (177 aa).

It belongs to the universal ribosomal protein uL6 family. In terms of assembly, part of the 50S ribosomal subunit.

Its function is as follows. This protein binds to the 23S rRNA, and is important in its secondary structure. It is located near the subunit interface in the base of the L7/L12 stalk, and near the tRNA binding site of the peptidyltransferase center. The polypeptide is Large ribosomal subunit protein uL6 (Brucella anthropi (strain ATCC 49188 / DSM 6882 / CCUG 24695 / JCM 21032 / LMG 3331 / NBRC 15819 / NCTC 12168 / Alc 37) (Ochrobactrum anthropi)).